A 641-amino-acid chain; its full sequence is Macrolide export ATP-binding/permease protein MacB (641 aa).

The ABC transporter domain maps to 2-236 (IFLKNICKNI…LILKTMPKEK (235 aa)). 34-41 (GQSGSGKT) serves as a coordination point for ATP. The next 4 helical transmembrane spans lie at 265–285 (ILTMLGIIIGIASVVCVVALG), 519–539 (ACVAVIALIVGGIGVMNIMLV), 571–591 (MICTIGAILGVILSIFVIFAF), and 604–624 (AYSVLLGLLSSMFIGVVFGFF).

Belongs to the ABC transporter superfamily. Macrolide exporter (TC 3.A.1.122) family. As to quaternary structure, homodimer.

Its subcellular location is the cell inner membrane. In terms of biological role, non-canonical ABC transporter that contains transmembrane domains (TMD), which form a pore in the inner membrane, and an ATP-binding domain (NBD), which is responsible for energy generation. Confers resistance against macrolides. The polypeptide is Macrolide export ATP-binding/permease protein MacB (Campylobacter jejuni subsp. jejuni serotype O:2 (strain ATCC 700819 / NCTC 11168)).